The chain runs to 235 residues: Lipoprotein-releasing system ATP-binding protein LolD (235 aa).

The region spanning 5–235 is the ABC transporter domain; that stretch reads LECRDIRKVY…LMTESASVEG (231 aa). Residue 41–48 participates in ATP binding; it reads GSSGSGKS.

This sequence belongs to the ABC transporter superfamily. Lipoprotein translocase (TC 3.A.1.125) family. The complex is composed of two ATP-binding proteins (LolD) and two transmembrane proteins (LolC and LolE).

Its subcellular location is the cell inner membrane. Part of the ABC transporter complex LolCDE involved in the translocation of mature outer membrane-directed lipoproteins, from the inner membrane to the periplasmic chaperone, LolA. Responsible for the formation of the LolA-lipoprotein complex in an ATP-dependent manner. The sequence is that of Lipoprotein-releasing system ATP-binding protein LolD from Vibrio parahaemolyticus serotype O3:K6 (strain RIMD 2210633).